A 158-amino-acid polypeptide reads, in one-letter code: 18.1 kDa class I heat shock protein (158 aa).

In terms of domain architecture, sHSP spans 44-158 (ENPAFVSTRV…AEVKSIEISG (115 aa)).

It belongs to the small heat shock protein (HSP20) family. In terms of assembly, forms oligomeric structures.

It is found in the cytoplasm. The polypeptide is 18.1 kDa class I heat shock protein (HSP18.1) (Pisum sativum (Garden pea)).